A 142-amino-acid chain; its full sequence is Large ribosomal subunit protein uL13 (142 aa).

Belongs to the universal ribosomal protein uL13 family. As to quaternary structure, part of the 50S ribosomal subunit.

In terms of biological role, this protein is one of the early assembly proteins of the 50S ribosomal subunit, although it is not seen to bind rRNA by itself. It is important during the early stages of 50S assembly. In Pseudomonas aeruginosa (strain LESB58), this protein is Large ribosomal subunit protein uL13.